A 399-amino-acid polypeptide reads, in one-letter code: Coiled-coil domain-containing protein 85C-B (399 aa).

2 coiled-coil regions span residues 52–84 and 113–144; these read NRSLQVHLHEIRNLKEINQKLQDDNQELRELCC and KEVSTYQQKLKELEINQENVLRENAELKDIIL. The disordered stretch occupies residues 151-199; it reads NGAGSRSSIDSQSSLSNLNGGSGTVRDVGDGSSTSSGGSAGSPDHHHNH. The span at 155–169 shows a compositional bias: low complexity; that stretch reads SRSSIDSQSSLSNLN.

It belongs to the CCDC85 family.

Its subcellular location is the cell junction. It is found in the tight junction. The protein resides in the adherens junction. May play a role in cell-cell adhesion and epithelium development through its interaction with proteins of the beta-catenin family. May play an important role in cortical development, especially in the maintenance of radial glia. The polypeptide is Coiled-coil domain-containing protein 85C-B (ccdc85cb) (Danio rerio (Zebrafish)).